The following is an 83-amino-acid chain: Exodeoxyribonuclease 7 small subunit (83 aa).

This sequence belongs to the XseB family. As to quaternary structure, heterooligomer composed of large and small subunits.

The protein localises to the cytoplasm. It carries out the reaction Exonucleolytic cleavage in either 5'- to 3'- or 3'- to 5'-direction to yield nucleoside 5'-phosphates.. Its function is as follows. Bidirectionally degrades single-stranded DNA into large acid-insoluble oligonucleotides, which are then degraded further into small acid-soluble oligonucleotides. The polypeptide is Exodeoxyribonuclease 7 small subunit (Heliobacterium modesticaldum (strain ATCC 51547 / Ice1)).